A 315-amino-acid chain; its full sequence is 4-hydroxy-3-methylbut-2-enyl diphosphate reductase (315 aa).

[4Fe-4S] cluster is bound at residue cysteine 12. Positions 43 and 81 each coordinate (2E)-4-hydroxy-3-methylbut-2-enyl diphosphate. 2 residues coordinate dimethylallyl diphosphate: histidine 43 and histidine 81. Isopentenyl diphosphate is bound by residues histidine 43 and histidine 81. Cysteine 103 is a binding site for [4Fe-4S] cluster. Histidine 131 contacts (2E)-4-hydroxy-3-methylbut-2-enyl diphosphate. Histidine 131 is a binding site for dimethylallyl diphosphate. Isopentenyl diphosphate is bound at residue histidine 131. Glutamate 133 functions as the Proton donor in the catalytic mechanism. Residue threonine 170 participates in (2E)-4-hydroxy-3-methylbut-2-enyl diphosphate binding. A [4Fe-4S] cluster-binding site is contributed by cysteine 198. (2E)-4-hydroxy-3-methylbut-2-enyl diphosphate-binding residues include serine 226, asparagine 228, and serine 271. Dimethylallyl diphosphate is bound by residues serine 226, asparagine 228, and serine 271. Isopentenyl diphosphate contacts are provided by serine 226, asparagine 228, and serine 271.

Belongs to the IspH family. [4Fe-4S] cluster is required as a cofactor.

The enzyme catalyses isopentenyl diphosphate + 2 oxidized [2Fe-2S]-[ferredoxin] + H2O = (2E)-4-hydroxy-3-methylbut-2-enyl diphosphate + 2 reduced [2Fe-2S]-[ferredoxin] + 2 H(+). It carries out the reaction dimethylallyl diphosphate + 2 oxidized [2Fe-2S]-[ferredoxin] + H2O = (2E)-4-hydroxy-3-methylbut-2-enyl diphosphate + 2 reduced [2Fe-2S]-[ferredoxin] + 2 H(+). The protein operates within isoprenoid biosynthesis; dimethylallyl diphosphate biosynthesis; dimethylallyl diphosphate from (2E)-4-hydroxy-3-methylbutenyl diphosphate: step 1/1. It functions in the pathway isoprenoid biosynthesis; isopentenyl diphosphate biosynthesis via DXP pathway; isopentenyl diphosphate from 1-deoxy-D-xylulose 5-phosphate: step 6/6. In terms of biological role, catalyzes the conversion of 1-hydroxy-2-methyl-2-(E)-butenyl 4-diphosphate (HMBPP) into a mixture of isopentenyl diphosphate (IPP) and dimethylallyl diphosphate (DMAPP). Acts in the terminal step of the DOXP/MEP pathway for isoprenoid precursor biosynthesis. The polypeptide is 4-hydroxy-3-methylbut-2-enyl diphosphate reductase (Anoxybacillus flavithermus (strain DSM 21510 / WK1)).